A 106-amino-acid chain; its full sequence is Somatoliberin (106 aa).

The N-terminal stretch at 1–19 (MLLWVFFLVTLTLSSGSHG) is a signal peptide. A propeptide spanning residues 20-30 (SLPSQPLRIPR) is cleaved from the precursor. L74 carries the post-translational modification Leucine amide. Residues 77-106 (QVDGVWTDQQQMALESTLVSLLQERRNSQG) constitute a propeptide that is removed on maturation.

It belongs to the glucagon family.

It localises to the secreted. GRF is released by the hypothalamus and acts on the adenohypophyse to stimulate the secretion of growth hormone. This chain is Somatoliberin (GHRH), found in Bos taurus (Bovine).